We begin with the raw amino-acid sequence, 430 residues long: Asparagine--tRNA ligase (430 aa).

The protein belongs to the class-II aminoacyl-tRNA synthetase family. In terms of assembly, homodimer.

It localises to the cytoplasm. The enzyme catalyses tRNA(Asn) + L-asparagine + ATP = L-asparaginyl-tRNA(Asn) + AMP + diphosphate + H(+). The sequence is that of Asparagine--tRNA ligase from Staphylococcus haemolyticus (strain JCSC1435).